A 144-amino-acid polypeptide reads, in one-letter code: Peptide methionine sulfoxide reductase B7 (144 aa).

In terms of domain architecture, MsrB spans 19–140; the sequence is DEEWRAVLSP…NSVSLKFSSA (122 aa). Cys58, Cys61, Cys104, and Cys107 together coordinate Zn(2+). Cys76 and Cys129 form a disulfide bridge. Catalysis depends on Cys129, which acts as the Nucleophile.

Belongs to the MsrB Met sulfoxide reductase family. Requires Zn(2+) as cofactor.

It is found in the cytoplasm. The protein resides in the cytosol. The enzyme catalyses L-methionyl-[protein] + [thioredoxin]-disulfide + H2O = L-methionyl-(R)-S-oxide-[protein] + [thioredoxin]-dithiol. In terms of biological role, catalyzes the reduction of methionine sulfoxide (MetSO) to methionine in proteins. Plays a protective role against oxidative stress by restoring activity to proteins that have been inactivated by methionine oxidation. MSRB family specifically reduces the MetSO R-enantiomer. This Arabidopsis thaliana (Mouse-ear cress) protein is Peptide methionine sulfoxide reductase B7 (MSRB7).